A 135-amino-acid chain; its full sequence is Probable histone H2A.1 (135 aa).

This sequence belongs to the histone H2A family. The nucleosome is a histone octamer containing two molecules each of H2A, H2B, H3 and H4 assembled in one H3-H4 heterotetramer and two H2A-H2B heterodimers. The octamer wraps approximately 147 bp of DNA.

The protein localises to the nucleus. The protein resides in the chromosome. Functionally, core component of nucleosome. Nucleosomes wrap and compact DNA into chromatin, limiting DNA accessibility to the cellular machineries which require DNA as a template. Histones thereby play a central role in transcription regulation, DNA repair, DNA replication and chromosomal stability. DNA accessibility is regulated via a complex set of post-translational modifications of histones, also called histone code, and nucleosome remodeling. This Oryza sativa subsp. japonica (Rice) protein is Probable histone H2A.1.